Consider the following 370-residue polypeptide: Uroporphyrinogen decarboxylase (370 aa).

Substrate is bound by residues 29 to 33 (RQAGR), aspartate 79, tyrosine 155, serine 210, and histidine 342.

Belongs to the uroporphyrinogen decarboxylase family. As to quaternary structure, homodimer.

The protein resides in the cytoplasm. The enzyme catalyses uroporphyrinogen III + 4 H(+) = coproporphyrinogen III + 4 CO2. The protein operates within porphyrin-containing compound metabolism; protoporphyrin-IX biosynthesis; coproporphyrinogen-III from 5-aminolevulinate: step 4/4. In terms of biological role, catalyzes the decarboxylation of four acetate groups of uroporphyrinogen-III to yield coproporphyrinogen-III. This Delftia acidovorans (strain DSM 14801 / SPH-1) protein is Uroporphyrinogen decarboxylase.